Reading from the N-terminus, the 804-residue chain is Phenylalanine--tRNA ligase beta subunit (804 aa).

The tRNA-binding domain occupies 38–148 (RAAFRAFTIA…ENAPVGTSFA (111 aa)). The region spanning 401 to 476 (HTARVIDFPV…RIHGINRIDP (76 aa)) is the B5 domain. Asp454, Asp460, Glu463, and Glu464 together coordinate Mg(2+). One can recognise an FDX-ACB domain in the interval 710–803 (SLFQSLKRDY…VAKQTGGVLR (94 aa)).

The protein belongs to the phenylalanyl-tRNA synthetase beta subunit family. Type 1 subfamily. As to quaternary structure, tetramer of two alpha and two beta subunits. Mg(2+) serves as cofactor.

The protein resides in the cytoplasm. It catalyses the reaction tRNA(Phe) + L-phenylalanine + ATP = L-phenylalanyl-tRNA(Phe) + AMP + diphosphate + H(+). This is Phenylalanine--tRNA ligase beta subunit from Brucella abortus (strain 2308).